Here is a 792-residue protein sequence, read N- to C-terminus: Homeobox protein HAZ1 (792 aa).

The segment at 1–154 (MDKTTTSDLV…RPPKGGTPKD (154 aa)) is disordered. Residues 15–36 (NIGSNAGSAQEPLTTNGKTSGV) show a composition bias toward polar residues. Positions 38–49 (NRYKQTVKRGRK) are enriched in basic residues. Over residues 51-67 (SQISPSKTYPLRSSHSN) the composition is skewed to polar residues. Basic residues predominate over residues 95 to 104 (VAKKRKRSKP). The span at 116-127 (TSEKKNKAHNEL) shows a compositional bias: basic and acidic residues. A PHD-type zinc finger spans residues 244–301 (DIFCAACGSKDVTLKNDIILCDGICDRGFHQYCLNPPLLAEDIPQGDEGWLCPACDCK). Disordered stretches follow at residues 338–495 (QIDA…NSNL) and 529–599 (YGKA…SDQQ). Acidic residues predominate over residues 345-354 (PSDDSADNDY). Positions 362-371 (HKVDEEKSSG) are enriched in basic and acidic residues. Acidic residues-rich tracts occupy residues 373–389 (DGGE…EDSE) and 433–453 (DESN…DDFC). The homeobox DNA-binding region spans 610–669 (STAKNRHFGPAINQKLKAHFKEDPYPSRATKENLAQELGLTFNQVTKWFSSTRHYARVAA). Disordered stretches follow at residues 677 to 697 (ENHT…QLRG) and 711 to 792 (SEER…KTGR). Composition is skewed to polar residues over residues 716 to 737 (GQSN…QSVA) and 746 to 760 (NQGN…TPNA). Over residues 774 to 792 (DEARRKAVQRELRKMKTGR) the composition is skewed to basic and acidic residues.

It belongs to the PHD-associated homeobox family. As to expression, expressed in roots, leaves, stems, panicle and seeds.

It localises to the nucleus. Its function is as follows. Transcriptional repressor involved in the regulation of gibberrelin (GA) signaling. Binds to the 5'-GATC-3' motif of HD16/EL1 promoter. Functions as a positive regulator of GA signaling by suppressing the expression of HD16/EL1, a negative regulator of GA signaling. The sequence is that of Homeobox protein HAZ1 from Oryza sativa subsp. japonica (Rice).